A 789-amino-acid polypeptide reads, in one-letter code: MDVSGQETDWRSAAFRQKLVSQIEDAMRKAGVAHSKSSKDMESHVFLKAKTRDEYLSLVARLIIHFRDIHNKKSQASVSDPMNALQSLTGGPTPGAAGIGMPPRGPGQSLGGMGGLGAMGQPLPLSGQPPPGTSGMAPHGMAVVSTATPQTQLQLQQVALQQQQQQQQQQQFQQQQAALQQQQQQQQQQQQQQQFQAQQNAMQQQFQAVVQQQQLQQQQQQQHLIKLHHQSQQQQIQQQQLQRMAQLQLQQQQQQQQQQALQAQPPMQQPSMQQPQPPPSQALPQQLSQLHHPQHHQPPPQAQQSPIAQNQPPQIPPQSQSQPLVSQAQALPGPMLYAAQQQLKFVRAPMVVQQPQVQPQVQQVQPQVQPQAAVQAAQSAQMVAPGVQMIAEALAQGGMHVRARFPPTSTMSAGPSSSISLGGQPTTQVSQSSLTMLSSPSPGQQVQTPQSMPPPPQPSPQPGSQPNSNVSSGPAPSPSSFLPSPSPQPSQSPVTARTPQNFSVPSPGPLNTPVNPSSVMSPAGSSQAEEQQYLDKLKQLSKYIEPLRRMINKIDKNEDRKKDLSKMKSLLDILTDPSKRCPLKTLQKCEIALEKLKNDMAVPTPPPPPVLPTKQQDLCQPLLDAVLANIRSPVFNHSLYRTFVPAMMAIHGPPIVSPVVCSRKRRFEEDERQSIPNVLQGEVARLDPKFLVNLDPSHCSNNGTVHLICKLDDKDLPSVPPLELSVPADYPAQSPMWIDRQWQYDANPFLQSVHRCMTSRLLQLPDKHSVTALLNTWAQSIHQACLSAA.

The tract at residues 9–73 is interaction with SREBF1; it reads DWRSAAFRQK…IHFRDIHNKK (65 aa). 2 disordered regions span residues 88-140 and 257-326; these read LTGG…APHG and QQQA…PLVS. Positions 89-102 are enriched in low complexity; that stretch reads TGGPTPGAAGIGMP. The segment covering 108–118 has biased composition (gly residues); it reads QSLGGMGGLGA. Low complexity-rich tracts occupy residues 257-274, 282-291, and 302-326; these read QQQA…SMQQ, ALPQQLSQLH, and AQQS…PLVS. R347 is subject to Asymmetric dimethylarginine. Residues 404-531 form a disordered region; the sequence is RFPPTSTMSA…PAGSSQAEEQ (128 aa). The segment covering 407–426 has biased composition (polar residues); it reads PTSTMSAGPSSSISLGGQPT. Over residues 427-450 the composition is skewed to low complexity; it reads TQVSQSSLTMLSSPSPGQQVQTPQ. Residues 451 to 463 are compositionally biased toward pro residues; sequence SMPPPPQPSPQPG. The span at 464–483 shows a compositional bias: low complexity; that stretch reads SQPNSNVSSGPAPSPSSFLP. Polar residues-rich tracts occupy residues 494–504 and 512–530; these read VTARTPQNFSV and TPVN…QAEE. Residues 548-565 carry the Nuclear localization signal motif; the sequence is RRMINKIDKNEDRKKDLS. T604 carries the phosphothreonine modification.

The protein belongs to the Mediator complex subunit 15 family. In terms of assembly, component of the Mediator complex, which is composed of MED1, MED4, MED6, MED7, MED8, MED9, MED10, MED11, MED12, MED13, MED13L, MED14, MED15, MED16, MED17, MED18, MED19, MED20, MED21, MED22, MED23, MED24, MED25, MED26, MED27, MED29, MED30, MED31, CCNC, CDK8 and CDC2L6/CDK11. The MED12, MED13, CCNC and CDK8 subunits form a distinct module termed the CDK8 module. Mediator containing the CDK8 module is less active than Mediator lacking this module in supporting transcriptional activation. Individual preparations of the Mediator complex lacking one or more distinct subunits have been variously termed ARC, CRSP, DRIP, PC2, SMCC and TRAP. Interacts with SMAD2, SMAD3, SREBF1 and SREBF2. Interacts with WWTR1. Interacts with TRIM11. In terms of processing, ubiquitinated by TRIM11, leading to proteasomal degradation.

Its subcellular location is the cytoplasm. The protein resides in the nucleus. Component of the Mediator complex, a coactivator involved in the regulated transcription of nearly all RNA polymerase II-dependent genes. Mediator functions as a bridge to convey information from gene-specific regulatory proteins to the basal RNA polymerase II transcription machinery. Mediator is recruited to promoters by direct interactions with regulatory proteins and serves as a scaffold for the assembly of a functional preinitiation complex with RNA polymerase II and the general transcription factors. Required for cholesterol-dependent gene regulation. Positively regulates the Nodal signaling pathway. In Mus musculus (Mouse), this protein is Mediator of RNA polymerase II transcription subunit 15 (Med15).